Here is a 258-residue protein sequence, read N- to C-terminus: tRNA pseudouridine synthase A (258 aa).

The active-site Nucleophile is aspartate 52. Tyrosine 110 provides a ligand contact to substrate.

The protein belongs to the tRNA pseudouridine synthase TruA family. In terms of assembly, homodimer.

The enzyme catalyses uridine(38/39/40) in tRNA = pseudouridine(38/39/40) in tRNA. Its function is as follows. Formation of pseudouridine at positions 38, 39 and 40 in the anticodon stem and loop of transfer RNAs. In Francisella tularensis subsp. holarctica (strain LVS), this protein is tRNA pseudouridine synthase A.